The chain runs to 198 residues: MRIKKSDFITSAVKKNQYPIDNRVEVAFVGRSNVGKSSLINSLTNRKKLAKVSQTPGKTRLVNFFLINDDFYLVDLPGYGYAKVSKAEKDSWGKTVEMYLTGREQLKRVVLLVDSRHKPTGDDIIMHEWIKHFGYDVIVVATKSDKLTRNELKKNEKVIKETLKLNSDDKLYFFSSLNKDGKDELIDNLFLEFATDLD.

Positions 22–195 (NRVEVAFVGR…IDNLFLEFAT (174 aa)) constitute an EngB-type G domain. GTP contacts are provided by residues 30–37 (GRSNVGKS), 57–61 (GKTRL), 75–78 (DLPG), 142–145 (TKSD), and 174–176 (FSS). 2 residues coordinate Mg(2+): S37 and T59.

This sequence belongs to the TRAFAC class TrmE-Era-EngA-EngB-Septin-like GTPase superfamily. EngB GTPase family. It depends on Mg(2+) as a cofactor.

Necessary for normal cell division and for the maintenance of normal septation. In Clostridium beijerinckii (strain ATCC 51743 / NCIMB 8052) (Clostridium acetobutylicum), this protein is Probable GTP-binding protein EngB.